The chain runs to 507 residues: Histidine ammonia-lyase (507 aa).

A cross-link (5-imidazolinone (Ser-Gly)) is located at residues 143 to 145; it reads SSG. S144 is subject to 2,3-didehydroalanine (Ser).

The protein belongs to the PAL/histidase family. Post-translationally, contains an active site 4-methylidene-imidazol-5-one (MIO), which is formed autocatalytically by cyclization and dehydration of residues Ser-Ser-Gly.

Its subcellular location is the cytoplasm. It catalyses the reaction L-histidine = trans-urocanate + NH4(+). It functions in the pathway amino-acid degradation; L-histidine degradation into L-glutamate; N-formimidoyl-L-glutamate from L-histidine: step 1/3. In Alkaliphilus metalliredigens (strain QYMF), this protein is Histidine ammonia-lyase.